A 719-amino-acid chain; its full sequence is Disintegrin and metalloproteinase domain-containing protein 18 (719 aa).

The first 19 residues, 1–19, serve as a signal peptide directing secretion; it reads MPLLFILAELAMLFARLDS. A propeptide spanning residues 20-179 is cleaved from the precursor; sequence EGICLHITVP…QDKNHSQLLP (160 aa). N-linked (GlcNAc...) asparagine glycans are attached at residues asparagine 61, asparagine 75, asparagine 121, asparagine 152, asparagine 173, asparagine 244, and asparagine 331. The Extracellular segment spans residues 173-683; sequence NHSQLLPQSL…TKRLSKNEDS (511 aa). In terms of domain architecture, Peptidase M12B spans 180-378; the sequence is QSLKLHIIVG…FDTQCLGDLS (199 aa). Disulfide bonds link cysteine 289-cysteine 373, cysteine 332-cysteine 357, and cysteine 334-cysteine 339. N-linked (GlcNAc...) asparagine glycans are attached at residues asparagine 356 and asparagine 405. The Disintegrin domain occupies 387 to 476; the sequence is QAVCGNGIME…HCVPDTFALN (90 aa). The cysteines at positions 447 and 468 are disulfide-linked. Residues asparagine 607, asparagine 614, and asparagine 621 are each glycosylated (N-linked (GlcNAc...) asparagine). One can recognise an EGF-like domain in the interval 616 to 650; it reads TGNDCNATKKCKGNGICNNFGNCQCFPDYRPPDCN. Disulfide bonds link cysteine 620–cysteine 632, cysteine 626–cysteine 638, and cysteine 640–cysteine 649. Residues 684 to 704 traverse the membrane as a helical segment; sequence WVILGFFIFLPFIVTFLVGIM. Topologically, residues 705-719 are cytoplasmic; it reads KRNERKIVPQGEHKI.

In terms of processing, the prodomain and the metalloprotease-like domain are cleaved during the epididymal maturation of the spermatozoa. In terms of tissue distribution, expressed specifically in testis.

Its subcellular location is the membrane. Its function is as follows. Sperm surface membrane protein that may be involved in spermatogenesis and fertilization. This is a non catalytic metalloprotease-like protein. In Mus musculus (Mouse), this protein is Disintegrin and metalloproteinase domain-containing protein 18 (Adam18).